The following is a 117-amino-acid chain: LIM and senescent cell antigen-like-containing domain protein 3 (117 aa).

In terms of domain architecture, LIM zinc-binding spans 70-117 (ATCERCKGGFAPAETIVNSNGELYHEQCFVCAQCFQQFPEGLFYEERT).

As to expression, detected in testis.

It is found in the cytoplasm. The polypeptide is LIM and senescent cell antigen-like-containing domain protein 3 (LIMS3) (Homo sapiens (Human)).